A 189-amino-acid chain; its full sequence is Molybdenum cofactor guanylyltransferase (189 aa).

Residues leucine 12–glycine 14, lysine 24, aspartate 68, and aspartate 94 each bind GTP. Aspartate 94 contributes to the Mg(2+) binding site.

The protein belongs to the MobA family. In terms of assembly, monomer. Mg(2+) is required as a cofactor.

It localises to the cytoplasm. It catalyses the reaction Mo-molybdopterin + GTP + H(+) = Mo-molybdopterin guanine dinucleotide + diphosphate. Functionally, transfers a GMP moiety from GTP to Mo-molybdopterin (Mo-MPT) cofactor (Moco or molybdenum cofactor) to form Mo-molybdopterin guanine dinucleotide (Mo-MGD) cofactor. In Xanthomonas euvesicatoria pv. vesicatoria (strain 85-10) (Xanthomonas campestris pv. vesicatoria), this protein is Molybdenum cofactor guanylyltransferase.